The primary structure comprises 1158 residues: Protein transport protein Sec31B (1158 aa).

WD repeat units follow at residues 4–47 (KELE…EIFE), 65–110 (VSSR…SSGK), 119–159 (KHTG…VPMT), 166–206 (NPPE…PIIK), 209–254 (SHSS…SPLK), 258–298 (SHSR…VVYK), and 301–341 (TQSS…WEAQ). The stretch at 376 to 407 (SFAFGGKLVTFGLPSIPVQPVAQACSRPVFIS) is one WD 8; interaction with SEC13 repeat. Disordered regions lie at residues 485–520 (LKSD…HTAK), 797–843 (TSSY…SSDH), and 968–1010 (GPQD…PEPQ). Over residues 822–840 (QPSSVMPFSPSQPSPSQGS) the composition is skewed to low complexity.

The protein belongs to the WD repeat SEC31 family. COPII is composed of at least 5 proteins: the SEC23/24 complex, the SEC13/31 complex and SAR1. SEC13 and SEC31 make a 2:2 tetramer that forms the edge element of the COPII outer coat. The tetramer self-assembles in multiple copies to form the complete polyhedral cage. Interacts (via WD 8) with SEC13. Interacts with SEC31A. Monoubiquitinated by the BCR(KLHL12) E3 ubiquitin ligase complex, leading to regulate the size of COPII coats.

The protein resides in the cytoplasm. The protein localises to the cytoplasmic vesicle. It is found in the COPII-coated vesicle membrane. Its subcellular location is the endoplasmic reticulum membrane. Its function is as follows. As a component of the coat protein complex II (COPII), may function in vesicle budding and cargo export from the endoplasmic reticulum. This Mus musculus (Mouse) protein is Protein transport protein Sec31B (Sec31b).